The chain runs to 128 residues: MPFIYRRRVQFYETDAQGIVHHSNYFRYFEEARGEFLRSKGFPYSKMRDMGLEVVLLNAYCEYKKPLFYDDVFEVHLNLEELSRFTFTFSYIVFKEDIAVAKANTKHCMVKNGKIVSIPKEVLEVLKD.

Aspartate 15 is a catalytic residue.

It belongs to the 4-hydroxybenzoyl-CoA thioesterase family.

The sequence is that of Putative esterase aq_1494 from Aquifex aeolicus (strain VF5).